The sequence spans 124 residues: Small ribosomal subunit protein bS6 (124 aa).

The segment at 99–124 (PLPAPRVMPGSEAAQQQQAEAAASAD) is disordered. A compositionally biased stretch (low complexity) spans 109 to 124 (SEAAQQQQAEAAASAD).

It belongs to the bacterial ribosomal protein bS6 family.

Functionally, binds together with bS18 to 16S ribosomal RNA. This Synechococcus sp. (strain CC9605) protein is Small ribosomal subunit protein bS6.